Here is a 332-residue protein sequence, read N- to C-terminus: Phospholipase A2 inhibitor beta (332 aa).

A signal peptide spans 1–23 (MKSSVPSLLFVSLVMSLNSYTQQ). Asn35 is a glycosylation site (N-linked (GlcNAc...) asparagine). LRR repeat units lie at residues 78–101 (LPNL…LFRN), 103–125 (PELH…IFTS), 127–149 (TSLT…WFET), 150–173 (LKEL…CFDK), 175–197 (EKLT…MFSG), 198–221 (LDNL…SFHG), 223–245 (PKLS…VFQP), and 247–269 (NHXV…VAIP). Asn232 carries an N-linked (GlcNAc...) asparagine glycan. An N-linked (GlcNAc...) asparagine glycan is attached at Asn272. The LRRCT domain occupies 280-331 (NPWACNCRMDNLLTWVKEHKIDLYSKQEIVCAFPKSFKGEEATSLHRSQICP).

The protein belongs to the beta-type phospholipase A2 inhibitor family. As to quaternary structure, homotrimer.

The protein resides in the secreted. Functionally, inhibits the enzymatic activity of the basic phospholipase A2 (PLA2). This Elaphe climacophora (Japanese rat snake) protein is Phospholipase A2 inhibitor beta.